The chain runs to 216 residues: Thioredoxin-like 2, chloroplastic (216 aa).

The N-terminal 58 residues, 1 to 58 (MAEALLPLPRRLVVTASTPACSSASSSTSPSPHCLLSRANPRPPRLAAPSPPRHRRLK), are a transit peptide targeting the chloroplast. Positions 19-40 (PACSSASSSTSPSPHCLLSRAN) are enriched in low complexity. The interval 19 to 70 (PACSSASSSTSPSPHCLLSRANPRPPRLAAPSPPRHRRLKAHAAVSDKSEQP) is disordered. A compositionally biased stretch (pro residues) spans 41–51 (PRPPRLAAPSP). The Thioredoxin domain maps to 61 to 188 (AAVSDKSEQP…LKDAIAVHNT (128 aa)). Residues Cys-111 and Cys-114 each act as nucleophile in the active site. A disulfide bond links Cys-111 and Cys-114.

The protein belongs to the thioredoxin family.

Its subcellular location is the plastid. It localises to the chloroplast. Its function is as follows. Probable thiol-disulfide oxidoreductase that may participate in various redox reactions. The polypeptide is Thioredoxin-like 2, chloroplastic (Oryza sativa subsp. japonica (Rice)).